Consider the following 131-residue polypeptide: Ribonuclease VapC30 (131 aa).

Positions 1–129 (MVIDTSALVA…FQHTDIATVA (129 aa)) constitute a PINc domain. Positions 4 and 99 each coordinate Mg(2+).

The protein belongs to the PINc/VapC protein family. Mg(2+) is required as a cofactor.

Its function is as follows. Toxic component of a type II toxin-antitoxin (TA) system. An RNase. Its toxic effect is neutralized by coexpression with cognate antitoxin VapB30. This Mycobacterium tuberculosis (strain CDC 1551 / Oshkosh) protein is Ribonuclease VapC30.